The sequence spans 175 residues: Co-chaperone protein HscB homolog (175 aa).

In terms of domain architecture, J spans 7-79; that stretch reads SHFDLFDLPA…LKRATYLLHL (73 aa).

The protein belongs to the HscB family. As to quaternary structure, interacts with HscA and stimulates its ATPase activity.

Functionally, co-chaperone involved in the maturation of iron-sulfur cluster-containing proteins. Seems to help targeting proteins to be folded toward HscA. The protein is Co-chaperone protein HscB homolog of Paraburkholderia xenovorans (strain LB400).